Here is a 745-residue protein sequence, read N- to C-terminus: uncharacterized protein (745 aa).

The HTH araC/xylS-type domain maps to 158-256 (NQVCDYIELH…HQTPKQYRGD (99 aa)). 2 DNA-binding regions (H-T-H motif) span residues 175-196 (SELS…TESL) and 223-246 (ITDI…KHFT).

This is an uncharacterized protein from Staphylococcus aureus (strain MW2).